We begin with the raw amino-acid sequence, 563 residues long: (R)-mandelonitrile lyase 2 (563 aa).

The N-terminal stretch at 1–27 is a signal peptide; sequence MEKSTMSAILLVLYIFVLHLQYSEVHS. FAD is bound by residues 63 to 64, 82 to 83, V129, T133, and 137 to 140; these read TS, ER, and NAGV. N145 and N162 each carry an N-linked (GlcNAc...) asparagine glycan. V244 is an FAD binding site. Residue C355 participates in substrate binding. N379 and N419 each carry an N-linked (GlcNAc...) asparagine glycan. C426 and C477 form a disulfide bridge. Y484 lines the substrate pocket. FAD-binding positions include 485 to 486 and G514; that span reads WH. Residue H486 is the Proton donor of the active site. Residue H524 is the Proton acceptor of the active site. 525–526 is a binding site for FAD; the sequence is PQ.

Belongs to the GMC oxidoreductase family. As to quaternary structure, monomer. FAD is required as a cofactor. Post-translationally, glycosylated. Deglycosylation does not affect the enzymatic activity.

The enzyme catalyses (R)-mandelonitrile = benzaldehyde + hydrogen cyanide. In terms of biological role, involved in cyanogenesis, the release of HCN from injured tissues. Catalyzes the stereospecific addition of HCN to a variety of aldehydes in vitro. Has no oxidase activity. The redox properties of the FAD cofactor appear to be unimportant for catalysis. The protein is (R)-mandelonitrile lyase 2 (MDL2) of Prunus dulcis (Almond).